A 301-amino-acid polypeptide reads, in one-letter code: Methionine aminopeptidase (301 aa).

Residue His65 participates in substrate binding. A divalent metal cation-binding residues include Asp85, Asp96, and His156. His164 lines the substrate pocket. A divalent metal cation is bound by residues Glu189 and Glu284.

It belongs to the peptidase M24A family. Methionine aminopeptidase archaeal type 2 subfamily. Monomer. Co(2+) is required as a cofactor. Requires Zn(2+) as cofactor. The cofactor is Mn(2+). Fe(2+) serves as cofactor.

The enzyme catalyses Release of N-terminal amino acids, preferentially methionine, from peptides and arylamides.. Functionally, removes the N-terminal methionine from nascent proteins. The N-terminal methionine is often cleaved when the second residue in the primary sequence is small and uncharged (Met-Ala-, Cys, Gly, Pro, Ser, Thr, or Val). The sequence is that of Methionine aminopeptidase from Saccharolobus solfataricus (strain ATCC 35092 / DSM 1617 / JCM 11322 / P2) (Sulfolobus solfataricus).